A 459-amino-acid polypeptide reads, in one-letter code: Disease resistance protein CHL1 (459 aa).

Residues 16–170 (REVDVFLSFC…QIARDISLVV (155 aa)) enclose the TIR domain. Glu-89 is an active-site residue. An NB-ARC domain is found at 191–401 (VYDLLALEVN…LLKLKAKQGG (211 aa)). Residues 429 to 440 (ERKESSQDKSQQ) show a composition bias toward basic and acidic residues. The disordered stretch occupies residues 429–459 (ERKESSQDKSQQESEVAADILIGKESSQDKQ).

Mostly expressed in leaves, stems and roots, and, to a lower extent, in flowers and siliques.

It is found in the cytoplasm. It catalyses the reaction NAD(+) + H2O = ADP-D-ribose + nicotinamide + H(+). Its function is as follows. Confers resistance to low temperatures by limiting chloroplast damage and cell death, thus maintaining growth homeostasis. The protein is Disease resistance protein CHL1 of Arabidopsis thaliana (Mouse-ear cress).